We begin with the raw amino-acid sequence, 410 residues long: MAEGKGFLRLEWARDHMPVIAEIRKRFLDEKPFKGINIAMALHVEAKTGIFSLLLKEGGANVRMASCNPLSSDDSVVESLKTDYGMPVFARKGETQEEYYENLQRTLEKPPDIIIDDGGDLTKLVHTERKDLSKNIMGGNEETTTGVVRLKAMEKAGVLLFPMFDVNDANMKHLFDNRYGTGQSTLDGIMNSTNLLIAGRNVVVAGYGYCGRGIAMRLKGMGANVIVTEIDPIKANEAIMDGFQVRRMNDAIRYADMVITATGMKDVVKYEDALVAKKNIVLANAGHFDNEVAVKEIEKHSLEKREVREFVKRYRLENGNTVDVIADGRLVNLAAGQGHPVEIMDLSFALQALTAEYLVKNHQNLEKKVYPVPPEIDRYVAEIRLKQFGGELDTLTEDQIKYLNSWDEGT.

Residues D117 and E142 each contribute to the substrate site. 143-145 (TTT) contributes to the NAD(+) binding site. Residues K172 and D176 each coordinate substrate. Residues N177, 206–211 (GYGYCG), E229, 285–287 (AGH), and N332 each bind NAD(+).

The protein belongs to the adenosylhomocysteinase family. NAD(+) serves as cofactor.

Its subcellular location is the cytoplasm. It carries out the reaction S-adenosyl-L-homocysteine + H2O = L-homocysteine + adenosine. It participates in amino-acid biosynthesis; L-homocysteine biosynthesis; L-homocysteine from S-adenosyl-L-homocysteine: step 1/1. May play a key role in the regulation of the intracellular concentration of adenosylhomocysteine. This is Adenosylhomocysteinase from Thermoplasma volcanium (strain ATCC 51530 / DSM 4299 / JCM 9571 / NBRC 15438 / GSS1).